Here is a 167-residue protein sequence, read N- to C-terminus: Secretion monitor (167 aa).

The first 36 residues, methionine 1–alanine 36, serve as a signal peptide directing secretion.

Belongs to the SecM family.

The protein localises to the cytoplasm. It is found in the cytosol. The protein resides in the periplasm. Regulates secA expression by translational coupling of the secM secA operon. Translational pausing at a specific Pro residue 5 residues before the end of the protein may allow disruption of a mRNA repressor helix that normally suppresses secA translation initiation. The protein is Secretion monitor of Erwinia tasmaniensis (strain DSM 17950 / CFBP 7177 / CIP 109463 / NCPPB 4357 / Et1/99).